We begin with the raw amino-acid sequence, 485 residues long: GlcNAc-binding protein A (485 aa).

An N-terminal signal peptide occupies residues 1-23 (MKKQPKMTAIALILSGISGLAYG). Residues 24–201 (HGYVSAVENG…SFYNVIDVKF (178 aa)) enclose the Chitin-binding type-4 domain. In terms of domain architecture, Chitin-binding type-3 spans 437–478 (AGTKVLASDGAIYQCKPWPYSGYCQQWTSNATQYQPGTGSHW).

The protein belongs to the GbpA family.

The protein localises to the secreted. Its function is as follows. Probably interacts with GlcNAc residues. May promote attachment to both epithelial cell surfaces and chitin. The sequence is that of GlcNAc-binding protein A from Vibrio cholerae serotype O1 (strain ATCC 39541 / Classical Ogawa 395 / O395).